A 1241-amino-acid chain; its full sequence is ATP-dependent helicase/nuclease subunit A (1241 aa).

The UvrD-like helicase ATP-binding domain maps to 12-485 (SQWTDDQWKA…IDLAKNFRSR (474 aa)). Residue 33–40 (AAAGSGKT) participates in ATP binding. A UvrD-like helicase C-terminal domain is found at 505–805 (GEIDYDADAE…RIMTIHKSKG (301 aa)).

It belongs to the helicase family. AddA subfamily. As to quaternary structure, heterodimer of AddA and AddB/RexB. Mg(2+) serves as cofactor.

It carries out the reaction Couples ATP hydrolysis with the unwinding of duplex DNA by translocating in the 3'-5' direction.. The catalysed reaction is ATP + H2O = ADP + phosphate + H(+). In terms of biological role, the heterodimer acts as both an ATP-dependent DNA helicase and an ATP-dependent, dual-direction single-stranded exonuclease. Recognizes the chi site generating a DNA molecule suitable for the initiation of homologous recombination. The AddA nuclease domain is required for chi fragment generation; this subunit has the helicase and 3' -&gt; 5' nuclease activities. This is ATP-dependent helicase/nuclease subunit A from Bacillus mycoides (strain KBAB4) (Bacillus weihenstephanensis).